Reading from the N-terminus, the 819-residue chain is Leucine--tRNA ligase (819 aa).

The short motif at 41 to 51 is the 'HIGH' region element; it reads PYPSGTLHVGH. A 'KMSKS' region motif is present at residues 578 to 582; sequence KMSKS. ATP is bound at residue lysine 581.

This sequence belongs to the class-I aminoacyl-tRNA synthetase family.

It is found in the cytoplasm. The enzyme catalyses tRNA(Leu) + L-leucine + ATP = L-leucyl-tRNA(Leu) + AMP + diphosphate. In Fervidobacterium nodosum (strain ATCC 35602 / DSM 5306 / Rt17-B1), this protein is Leucine--tRNA ligase.